Consider the following 277-residue polypeptide: MFPFYSCWRTGLLLLLLAVAVRESWQTEEKTCDLVGEKGKESEKELALVKRLKPLFNKSFESTVGQGSDTYIYIFRVCREAGNHTSGAGLVQINKSNGKETVVGRLNETHIFNGSNWIMLIYKGGDEYDNHCGKEQRRAVVMISCNRHTLADNFNPVSEERGKVQDCFYLFEMDSSLACSPEISHLSVGSILLVTFASLVAVYVVGGFLYQRLVVGAKGMEQFPHLAFWQDLGNLVADGCDFVCRSKPRNVPAAYRGVGDDQLGEESEERDDHLLPM.

An N-terminal signal peptide occupies residues 1–26; sequence MFPFYSCWRTGLLLLLLAVAVRESWQ. Residues 27–185 lie on the Lumenal side of the membrane; that stretch reads TEEKTCDLVG…SLACSPEISH (159 aa). The 152-residue stretch at 30 to 181 folds into the MRH domain; sequence KTCDLVGEKG…EMDSSLACSP (152 aa). Residues Cys-32 and Cys-78 are joined by a disulfide bond. N-linked (GlcNAc...) asparagine glycans are attached at residues Asn-57, Asn-83, Asn-94, Asn-107, and Asn-113. Intrachain disulfides connect Cys-132–Cys-167 and Cys-145–Cys-179. A helical membrane pass occupies residues 186 to 210; sequence LSVGSILLVTFASLVAVYVVGGFLY. Residues 211–277 are Cytoplasmic-facing; it reads QRLVVGAKGM…EERDDHLLPM (67 aa). Residues 256 to 277 are disordered; it reads RGVGDDQLGEESEERDDHLLPM. The residue at position 267 (Ser-267) is a Phosphoserine.

Homodimer. Binds GGA1, GGA2 and GGA3.

It is found in the lysosome membrane. Transport of phosphorylated lysosomal enzymes from the Golgi complex and the cell surface to lysosomes. Lysosomal enzymes bearing phosphomannosyl residues bind specifically to mannose-6-phosphate receptors in the Golgi apparatus and the resulting receptor-ligand complex is transported to an acidic prelyosomal compartment where the low pH mediates the dissociation of the complex. The polypeptide is Cation-dependent mannose-6-phosphate receptor (M6PR) (Homo sapiens (Human)).